The primary structure comprises 92 residues: UPF0235 protein CCA_00247 (92 aa).

Belongs to the UPF0235 family.

The sequence is that of UPF0235 protein CCA_00247 from Chlamydia caviae (strain ATCC VR-813 / DSM 19441 / 03DC25 / GPIC) (Chlamydophila caviae).